The sequence spans 345 residues: UDP-N-acetylenolpyruvoylglucosamine reductase (345 aa).

In terms of domain architecture, FAD-binding PCMH-type spans 16–185; the sequence is VNAFAKSVVT…VSVGLRLCKK (170 aa). Arg162 is a catalytic residue. Ser231 serves as the catalytic Proton donor. Glu328 is an active-site residue.

Belongs to the MurB family. The cofactor is FAD.

It localises to the cytoplasm. It carries out the reaction UDP-N-acetyl-alpha-D-muramate + NADP(+) = UDP-N-acetyl-3-O-(1-carboxyvinyl)-alpha-D-glucosamine + NADPH + H(+). The protein operates within cell wall biogenesis; peptidoglycan biosynthesis. Its function is as follows. Cell wall formation. This is UDP-N-acetylenolpyruvoylglucosamine reductase from Blochmanniella pennsylvanica (strain BPEN).